The primary structure comprises 440 residues: Ribulose bisphosphate carboxylase large chain (440 aa).

Lys4 carries the post-translational modification N6,N6,N6-trimethyllysine. Substrate-binding residues include Asn113 and Thr163. Lys165 functions as the Proton acceptor in the catalytic mechanism. Substrate is bound at residue Lys167. Mg(2+)-binding residues include Lys191, Asp193, and Glu194. Lys191 carries the post-translational modification N6-carboxylysine. Catalysis depends on His284, which acts as the Proton acceptor. Substrate is bound by residues Arg285, His317, and Ser369.

The protein belongs to the RuBisCO large chain family. Type I subfamily. As to quaternary structure, heterohexadecamer of 8 large chains and 8 small chains; disulfide-linked. The disulfide link is formed within the large subunit homodimers. Requires Mg(2+) as cofactor. Post-translationally, the disulfide bond which can form in the large chain dimeric partners within the hexadecamer appears to be associated with oxidative stress and protein turnover.

Its subcellular location is the plastid. It is found in the chloroplast. The enzyme catalyses 2 (2R)-3-phosphoglycerate + 2 H(+) = D-ribulose 1,5-bisphosphate + CO2 + H2O. The catalysed reaction is D-ribulose 1,5-bisphosphate + O2 = 2-phosphoglycolate + (2R)-3-phosphoglycerate + 2 H(+). In terms of biological role, ruBisCO catalyzes two reactions: the carboxylation of D-ribulose 1,5-bisphosphate, the primary event in carbon dioxide fixation, as well as the oxidative fragmentation of the pentose substrate in the photorespiration process. Both reactions occur simultaneously and in competition at the same active site. This chain is Ribulose bisphosphate carboxylase large chain, found in Pteris vittata (Chinese ladder brake).